The sequence spans 120 residues: uncharacterized protein (120 aa).

The next 2 helical transmembrane spans lie at 26-46 (PSTS…PAGM) and 57-77 (LLFA…LTLV).

The protein resides in the membrane. This is an uncharacterized protein from Saccharomyces cerevisiae (strain ATCC 204508 / S288c) (Baker's yeast).